A 69-amino-acid polypeptide reads, in one-letter code: DNA-directed RNA polymerase subunit epsilon (69 aa).

The protein belongs to the RNA polymerase subunit epsilon family. As to quaternary structure, RNAP is composed of a core of 2 alpha, a beta and a beta' subunit. The core is associated with a delta subunit, and at least one of epsilon or omega. When a sigma factor is associated with the core the holoenzyme is formed, which can initiate transcription.

The catalysed reaction is RNA(n) + a ribonucleoside 5'-triphosphate = RNA(n+1) + diphosphate. A non-essential component of RNA polymerase (RNAP). This Bacillus velezensis (strain DSM 23117 / BGSC 10A6 / LMG 26770 / FZB42) (Bacillus amyloliquefaciens subsp. plantarum) protein is DNA-directed RNA polymerase subunit epsilon.